Consider the following 107-residue polypeptide: Small ribosomal subunit protein eS25 (107 aa).

A disordered region spans residues methionine 1–lysine 35. Over residues serine 8–glycine 20 the composition is skewed to low complexity. The segment covering lysine 21 to lysine 35 has biased composition (basic residues).

It belongs to the eukaryotic ribosomal protein eS25 family.

The chain is Small ribosomal subunit protein eS25 (RPS25) from Candida glabrata (strain ATCC 2001 / BCRC 20586 / JCM 3761 / NBRC 0622 / NRRL Y-65 / CBS 138) (Yeast).